A 31-amino-acid chain; its full sequence is Photosystem II reaction center protein T (31 aa).

A helical membrane pass occupies residues 3–23 (ALVYTFLLIGTLGVIFFAIFF).

Belongs to the PsbT family. As to quaternary structure, PSII is composed of 1 copy each of membrane proteins PsbA, PsbB, PsbC, PsbD, PsbE, PsbF, PsbH, PsbI, PsbJ, PsbK, PsbL, PsbM, PsbT, PsbY, PsbZ, Psb30/Ycf12, at least 3 peripheral proteins of the oxygen-evolving complex and a large number of cofactors. It forms dimeric complexes.

The protein localises to the plastid. The protein resides in the chloroplast thylakoid membrane. Functionally, found at the monomer-monomer interface of the photosystem II (PS II) dimer, plays a role in assembly and dimerization of PSII. PSII is a light-driven water plastoquinone oxidoreductase, using light energy to abstract electrons from H(2)O, generating a proton gradient subsequently used for ATP formation. This Euglena gracilis protein is Photosystem II reaction center protein T.